The chain runs to 225 residues: MNSMEFPLLDRTTPNSVISTTPNDLSNWSRLSSLWPLLYGTSCCFIEFASLIGSRFDFDRYGLVPRSSPRQADLILTAGTVTMKMAPSLVRLYEQMPEPKYVIAMGACTITGGMFSTDSYSTVRGVDKLIPVDVYLPGCPPKPEAIIDAITKLRKKVSREIYEDRIASQQEDRCFTTNHKFRVGRSIHTGNYDQELLYQSPSTSEILSETLFKYKSSLSSHELVN.

Residues Cys43, Cys44, Cys108, and Cys139 each coordinate [4Fe-4S] cluster.

It belongs to the complex I 20 kDa subunit family. As to quaternary structure, NDH is composed of at least 16 different subunits, 5 of which are encoded in the nucleus. Requires [4Fe-4S] cluster as cofactor.

It localises to the plastid. It is found in the chloroplast thylakoid membrane. It catalyses the reaction a plastoquinone + NADH + (n+1) H(+)(in) = a plastoquinol + NAD(+) + n H(+)(out). It carries out the reaction a plastoquinone + NADPH + (n+1) H(+)(in) = a plastoquinol + NADP(+) + n H(+)(out). Its function is as follows. NDH shuttles electrons from NAD(P)H:plastoquinone, via FMN and iron-sulfur (Fe-S) centers, to quinones in the photosynthetic chain and possibly in a chloroplast respiratory chain. The immediate electron acceptor for the enzyme in this species is believed to be plastoquinone. Couples the redox reaction to proton translocation, and thus conserves the redox energy in a proton gradient. The chain is NAD(P)H-quinone oxidoreductase subunit K, chloroplastic from Amborella trichopoda.